Here is a 483-residue protein sequence, read N- to C-terminus: Pre-glycoprotein polyprotein GP complex (483 aa).

Gly-2 carries N-myristoyl glycine; by host lipidation. Residues 2-17 (GQFISFMQEIPIFLQE) lie on the Extracellular side of the membrane. The helical transmembrane segment at 18–32 (ALNIALVAVSLICIV) threads the bilayer. Position 33 (Lys-33) is a topological domain, cytoplasmic. The helical transmembrane segment at 34–53 (GLVNLYRCGLFQLMVFLVLA) threads the bilayer. Extracellular-side segments run 54–58 (GRSCS) and 59–422 (EETF…TLVD). Cys-57 provides a ligand contact to Zn(2+). 2 N-linked (GlcNAc...) asparagine; by host glycosylation sites follow: Asn-83 and Asn-95. 6 disulfides stabilise this stretch: Cys-92–Cys-224, Cys-134–Cys-162, Cys-205–Cys-211, Cys-269–Cys-282, Cys-291–Cys-300, and Cys-354–Cys-375. 2 N-linked (GlcNAc...) asparagine; by host glycosylation sites follow: Asn-164 and Asn-176. Residues Asn-355, Asn-363, Asn-380, and Asn-385 are each glycosylated (N-linked (GlcNAc...) asparagine; by host). Residues 423 to 443 (ICFWSTVFFTSTLFLHLIGFP) traverse the membrane as a helical segment. The Cytoplasmic portion of the chain corresponds to 444 to 483 (THEHIRGEGCPLPHRLNSMGGCRCGKYLPLKKPTIWHRRH). Zn(2+)-binding residues include His-445, His-447, Cys-453, His-457, Cys-465, Cys-467, and His-483.

The protein belongs to the arenaviridae GPC protein family. In terms of assembly, homotetramer; disulfide-linked. Homotetramer. GP2 homotetramers bind through ionic interactions with GP1 homotetramers to form the GP complex together with the stable signal peptide. The GP-C polyprotein interacts with the host protease MBTPS1/SKI-1 resulting in the polyprotein processing. Specific enzymatic cleavages in vivo yield mature proteins. GP-C polyprotein is cleaved in the endoplasmic reticulum by the host protease MBTPS1. Only cleaved glycoprotein is incorporated into virions. In terms of processing, the SSP remains stably associated with the GP complex following cleavage by signal peptidase and plays crucial roles in the trafficking of GP through the secretory pathway. Post-translationally, myristoylation is necessary for GP2-mediated fusion activity.

The protein localises to the virion membrane. It is found in the host endoplasmic reticulum membrane. The protein resides in the host Golgi apparatus membrane. It localises to the host cell membrane. Class I viral fusion protein that directs fusion of viral and host endosomal membranes, leading to delivery of the nucleocapsid into the cytoplasm. Membrane fusion is mediated by irreversible conformational changes induced upon acidification in the endosome. Its function is as follows. Stable signal peptide (SSP): cleaved and functions as a signal peptide. In addition, it is also retained as the third component of the GP complex. The SSP is required for efficient glycoprotein expression, post-translational maturation cleavage of GP1 and GP2, glycoprotein transport to the cell surface plasma membrane, formation of infectious virus particles, and acid pH-dependent glycoprotein-mediated cell fusion. In terms of biological role, interacts with the host receptor. In Artibeus (neotropical fruit bats), this protein is Pre-glycoprotein polyprotein GP complex.